The primary structure comprises 478 residues: MTIDHQHIFVGGQWIAPKSTQRSNILNASTEELVGSVPKCNNEDMDRAVAAAREAMRSLAWAGLDGKGRAQHLRRFADAVERRGQQLARSVSLQNGMPINVADQLESAFVVSLLRYYASLAENLVEEEARPSPTGSTTLVRRDPVGVVGAIIPWNFPVALSIFKIAPALAAGCAVVVKPSSGTVLDSYVLAEAAAEAGLPPGVINWVPGDRGIGSHLVSHPGVDKVAFTGSTSAGRIIAEACARLLRPVTLELGGKSAAIVLEDADLDALIRSLPMSSVLNNGQACFSCTRILAPAGRYDEVVDAIAGAVSAYSVGDALDRATVVGPMASAAHRDSVQRYIELGTGEARLVVGGGRTSQDRGWFVQPTVFADVDNRSRIAREEIFGPVLSIIRYEGEDEAVEIANDSEYGLGGTVWSTDHDHAVTIARRMETGTVGINGYMPDLNAPFGGVKSSGMGRELGPESIGAYQRYKSVYLLG.

230-235 serves as a coordination point for NAD(+); sequence GSTSAG. The Proton acceptor role is filled by E252. The active-site Nucleophile is C286.

It belongs to the aldehyde dehydrogenase family.

The catalysed reaction is (2E)-geranial + NAD(+) + H2O = geranate + NADH + 2 H(+). It catalyses the reaction perillyl aldehyde + NAD(+) + H2O = perillate + NADH + 2 H(+). The protein operates within terpene metabolism; monoterpene degradation. Its function is as follows. Involved in the degradation of the monoterpenes beta-myrcene and limonene. During anaerobic degradation of beta-myrcene, catalyzes the NAD(+)-dependent oxidation of geranial to geranic acid. Seems to be specific for the trans-isomer geranial, since it does not act on the cis-isomer neral. During degradation of limonene, catalyzes the NAD(+)-dependent conversion of perillyl aldehyde to perrilic acid. The chain is Geranial dehydrogenase from Castellaniella defragrans (strain DSM 12143 / CCUG 39792 / 65Phen) (Alcaligenes defragrans).